Consider the following 1955-residue polypeptide: 227 kDa spindle- and centromere-associated protein (1955 aa).

Coiled coils occupy residues 82–129 (KKRI…NDDV), 152–317 (EWAS…ELES), 385–1747 (VRNI…LIAL), and 1770–1813 (ERIV…ERFI). Disordered stretches follow at residues 1865 to 1896 (PTEQ…SYTY) and 1912 to 1955 (MTSS…TFSE). Positions 1878-1896 (RTSSTIKSSEGTTRESYTY) are enriched in polar residues. Over residues 1938-1948 (RKSRPATRKQQ) the composition is skewed to basic residues.

The protein localises to the cytoplasm. It localises to the cytoskeleton. The protein resides in the microtubule organizing center. It is found in the centrosome. Its subcellular location is the chromosome. The protein localises to the centromere. It localises to the kinetochore. The protein resides in the spindle. Functionally, may play a role in the organization of the spindle apparatus and its interaction with the centromeres. This Parascaris univalens (Nematode worm) protein is 227 kDa spindle- and centromere-associated protein (PUMA1).